The chain runs to 156 residues: Small ribosomal subunit protein uS7 (156 aa).

Belongs to the universal ribosomal protein uS7 family. Part of the 30S ribosomal subunit. Contacts proteins S9 and S11.

Functionally, one of the primary rRNA binding proteins, it binds directly to 16S rRNA where it nucleates assembly of the head domain of the 30S subunit. Is located at the subunit interface close to the decoding center, probably blocks exit of the E-site tRNA. This chain is Small ribosomal subunit protein uS7, found in Symbiobacterium thermophilum (strain DSM 24528 / JCM 14929 / IAM 14863 / T).